Reading from the N-terminus, the 283-residue chain is Protease HtpX (283 aa).

The next 2 helical transmembrane spans lie at 4–24 (IALF…ILSV) and 33–53 (GGIL…SLFM). Position 139 (H139) interacts with Zn(2+). E140 is an active-site residue. H143 contributes to the Zn(2+) binding site. Helical transmembrane passes span 147 to 167 (GDMV…IFLS) and 192 to 212 (FLVS…IAMW). E218 lines the Zn(2+) pocket.

This sequence belongs to the peptidase M48B family. Zn(2+) serves as cofactor.

It is found in the cell inner membrane. In Glaesserella parasuis serovar 5 (strain SH0165) (Haemophilus parasuis), this protein is Protease HtpX.